Reading from the N-terminus, the 515-residue chain is Galactokinase (515 aa).

4 residues coordinate alpha-D-galactose: Arg48, Asp54, His55, and Asp57. Residues Gly155, Gly157, Ser159, and Ser160 each coordinate ATP. Asp205 contacts alpha-D-galactose. The Proton acceptor role is filled by Asp205. The ATP site is built by Ser249, Asn250, and Lys251. Residue Tyr259 participates in alpha-D-galactose binding.

This sequence belongs to the GHMP kinase family. GalK subfamily.

The enzyme catalyses alpha-D-galactose + ATP = alpha-D-galactose 1-phosphate + ADP + H(+). Its pathway is carbohydrate metabolism; galactose metabolism. In terms of biological role, galactokinase is a key enzyme in the galactose metabolism where it catalyzes the conversion of alpha-D-galactose to galactose 1-phosphate. Can also induce the transcription of the gal genes in response to the organism being challenged with galactose as the sole source of carbon. This is Galactokinase from Candida albicans (Yeast).